The primary structure comprises 106 residues: UPF0145 protein PputGB1_2909 (106 aa).

It belongs to the UPF0145 family.

The chain is UPF0145 protein PputGB1_2909 from Pseudomonas putida (strain GB-1).